Reading from the N-terminus, the 171-residue chain is Transcription antitermination protein NusB (171 aa).

It belongs to the NusB family.

In terms of biological role, involved in transcription antitermination. Required for transcription of ribosomal RNA (rRNA) genes. Binds specifically to the boxA antiterminator sequence of the ribosomal RNA (rrn) operons. The chain is Transcription antitermination protein NusB from Pelodictyon phaeoclathratiforme (strain DSM 5477 / BU-1).